A 160-amino-acid polypeptide reads, in one-letter code: Gene 34 protein (160 aa).

The segment covering 1-11 (MDSPRGISTAT) has biased composition (polar residues). Residues 1-26 (MDSPRGISTATGDAHAEAAVSPAAEI) are disordered.

The sequence is that of Gene 34 protein from Equus caballus (Horse).